We begin with the raw amino-acid sequence, 736 residues long: Capsid protein (736 aa).

The segment at 633–692 (ESDALTLSPVHRPKRPKRDTQVKEKTPEKDSDSAVQLRRLQPWIHSSQETKDEEEEIPEG) is disordered. Residues 650 to 664 (RDTQVKEKTPEKDSD) show a composition bias toward basic and acidic residues.

The protein belongs to the anelloviridae capsid protein family.

The protein localises to the virion. Self assemble to form an icosahedral capsid. This chain is Capsid protein, found in Torque teno virus (isolate Human/Finland/Hel32/2002) (TTV).